Consider the following 220-residue polypeptide: Imidazoleglycerol-phosphate dehydratase (220 aa).

Substrate is bound by residues E14, 64–72 (HMIHALAKH), 90–94 (HHTTE), R116, and R138. Positions 64, 90, 91, and 94 each coordinate Mn(2+). Mn(2+)-binding residues include H162, H186, H187, and E190. Substrate contacts are provided by residues 186-194 (HHRSESAFK) and 214-216 (STK).

The protein belongs to the imidazoleglycerol-phosphate dehydratase family. It depends on Mn(2+) as a cofactor.

The catalysed reaction is D-erythro-1-(imidazol-4-yl)glycerol 3-phosphate = 3-(imidazol-4-yl)-2-oxopropyl phosphate + H2O. It functions in the pathway amino-acid biosynthesis; L-histidine biosynthesis; L-histidine from 5-phospho-alpha-D-ribose 1-diphosphate: step 6/9. This Saccharomyces cerevisiae (strain ATCC 204508 / S288c) (Baker's yeast) protein is Imidazoleglycerol-phosphate dehydratase.